The primary structure comprises 83 residues: Kappa-theraphotoxin-Cg2a (83 aa).

A signal peptide spans 1–21 (MKGSAFAIILGLVVLCACSFA). Residues 22–53 (EDEQDQFASPNELLRSMFLESRHELIPEVEGR) constitute a propeptide that is removed on maturation. 3 disulfides stabilise this stretch: cysteine 55-cysteine 69, cysteine 62-cysteine 74, and cysteine 68-cysteine 78. The residue at position 82 (leucine 82) is a Leucine amide.

It belongs to the neurotoxin 30 (phrixotoxin) family. As to expression, expressed by the venom gland.

The protein localises to the secreted. Functionally, inhibits voltage-gated potassium channels of the subtype Kv4.1/KCND1 with high affinity and shows weak effects on Kv4.2/KCND2 and Kv2.1/KCNB1 subtypes. The toxin modifies the gating behavior of the channel and may interact with the S3-S4 extracellular loop. The chain is Kappa-theraphotoxin-Cg2a from Chilobrachys guangxiensis (Chinese earth tiger tarantula).